The chain runs to 143 residues: Large ribosomal subunit protein uL16 (143 aa).

A compositionally biased stretch (basic residues) spans 1–14 (MLTPKRVKWRRQHR). The disordered stretch occupies residues 1-23 (MLTPKRVKWRRQHRPDRAGKAKG).

The protein belongs to the universal ribosomal protein uL16 family. In terms of assembly, part of the 50S ribosomal subunit.

Functionally, binds 23S rRNA and is also seen to make contacts with the A and possibly P site tRNAs. This Desulforudis audaxviator (strain MP104C) protein is Large ribosomal subunit protein uL16.